The following is a 457-amino-acid chain: Ribosomal protein uS12 methylthiotransferase RimO (457 aa).

Residues 6–116 (PKVGFVSLGC…VMEAVHAALP (111 aa)) enclose the MTTase N-terminal domain. 6 residues coordinate [4Fe-4S] cluster: Cys15, Cys51, Cys80, Cys147, Cys151, and Cys154. The 239-residue stretch at 133-371 (LTPRHYAYLK…AKQAQISALR (239 aa)) folds into the Radical SAM core domain. Residues 373-441 (ESKIGSVQQC…EHDLFGDALP (69 aa)) enclose the TRAM domain.

The protein belongs to the methylthiotransferase family. RimO subfamily. [4Fe-4S] cluster is required as a cofactor.

The protein resides in the cytoplasm. It carries out the reaction L-aspartate(89)-[ribosomal protein uS12]-hydrogen + (sulfur carrier)-SH + AH2 + 2 S-adenosyl-L-methionine = 3-methylsulfanyl-L-aspartate(89)-[ribosomal protein uS12]-hydrogen + (sulfur carrier)-H + 5'-deoxyadenosine + L-methionine + A + S-adenosyl-L-homocysteine + 2 H(+). Functionally, catalyzes the methylthiolation of an aspartic acid residue of ribosomal protein uS12. The sequence is that of Ribosomal protein uS12 methylthiotransferase RimO from Xanthomonas axonopodis pv. citri (strain 306).